The primary structure comprises 135 residues: DNA-directed RNA polymerase subunit omega (135 aa).

A disordered region spans residues 84–106 (IAGHSSHVSPSRSSRHTGLGKSF).

This sequence belongs to the RNA polymerase subunit omega family. In terms of assembly, the RNAP catalytic core consists of 2 alpha, 1 beta, 1 beta' and 1 omega subunit. When a sigma factor is associated with the core the holoenzyme is formed, which can initiate transcription.

It carries out the reaction RNA(n) + a ribonucleoside 5'-triphosphate = RNA(n+1) + diphosphate. Functionally, promotes RNA polymerase assembly. Latches the N- and C-terminal regions of the beta' subunit thereby facilitating its interaction with the beta and alpha subunits. This chain is DNA-directed RNA polymerase subunit omega, found in Anaplasma phagocytophilum (strain HZ).